We begin with the raw amino-acid sequence, 151 residues long: Ribonuclease P protein component (151 aa).

The interval M1–L62 is disordered. Over residues G28–A48 the composition is skewed to low complexity.

Belongs to the RnpA family. In terms of assembly, consists of a catalytic RNA component (M1 or rnpB) and a protein subunit.

The enzyme catalyses Endonucleolytic cleavage of RNA, removing 5'-extranucleotides from tRNA precursor.. Functionally, RNaseP catalyzes the removal of the 5'-leader sequence from pre-tRNA to produce the mature 5'-terminus. It can also cleave other RNA substrates such as 4.5S RNA. The protein component plays an auxiliary but essential role in vivo by binding to the 5'-leader sequence and broadening the substrate specificity of the ribozyme. This is Ribonuclease P protein component from Thermus oshimai.